Consider the following 632-residue polypeptide: SH2B adapter protein 2 (632 aa).

Tyr52 carries the post-translational modification Phosphotyrosine. Phosphoserine is present on Ser141. Residues 193–306 (DIQREGALRF…WVADIQGCVD (114 aa)) form the PH domain. The residue at position 310 (Ser310) is a Phosphoserine. Residues 381 to 409 (TLESPGGSGSDSNNTGEQGAETDPEAEPE) form a disordered region. A compositionally biased stretch (acidic residues) spans 400 to 409 (AETDPEAEPE). An SH2 domain is found at 417–515 (WFHGTLSRVK…SADITLRSYV (99 aa)). Disordered regions lie at residues 516–537 (RAQDPPPEPGPTPPAAPASPAC) and 558–632 (ASPS…YSFY). Positions 519 to 532 (DPPPEPGPTPPAAP) are enriched in pro residues. 2 stretches are compositionally biased toward low complexity: residues 558-579 (ASPSDAAGASSSSASSSSAASG) and 604-626 (EAVAATAAEEPPEAAPGRARAVE). Tyr629 carries the post-translational modification Phosphotyrosine.

This sequence belongs to the SH2B adapter family. As to quaternary structure, homodimer. Interacts with KIT/c-KIT, SHC1, EPOR, PDGFR, VAV1 and VAV3. Interacts (via N-terminal region) with SHC1. Interacts (via the phosphorylated C-terminus) with GRB2. Interacts (via its SH2 domain) with EPOR, INSR and KIT. Interacts with GRB2 after B-cell antigen receptor stimulation. Interacts (via PH domain) with VAV3. Interacts with NTRK1, NTRK2 and NTRK3 (phosphorylated); after stimulation of the receptor by its extracellular ligand and subsequent autophosphorylation of the receptor. Binds INSR, GRB2, ASB6 and CAP. Insulin stimulation leads to dissociation of CAP. Binds CBS only when SH2B2/APS has become phosphorylated. INSR binding does not depend on the phosphorylation of SH2B2/APS. In terms of processing, tyrosine phosphorylated by JAK2, KIT and other kinases activated by B-cell receptor in response to stimulation with cytokines, IL3, IL5, PDGF, IGF1, IGF2, CSF2/GM-CSF and cross-linking of the B-cell receptor complex. In terms of tissue distribution, expressed in spleen, prostate, testis, uterus, small intestine and skeletal muscle. Among hematopoietic cell lines, expressed exclusively in B-cells. Not expressed in most tumor cell lines.

It is found in the cytoplasm. Its subcellular location is the cell membrane. Functionally, adapter protein for several members of the tyrosine kinase receptor family. Involved in multiple signaling pathways. May be involved in coupling from immunoreceptor to Ras signaling. Acts as a negative regulator of cytokine signaling in collaboration with CBL. Binds to EPOR and suppresses EPO-induced STAT5 activation, possibly through a masking effect on STAT5 docking sites in EPOR. Suppresses PDGF-induced mitogenesis. May induce cytoskeletal reorganization via interaction with VAV3. The sequence is that of SH2B adapter protein 2 (SH2B2) from Homo sapiens (Human).